A 167-amino-acid chain; its full sequence is L-alanine exporter AlaE (167 aa).

4 helical membrane-spanning segments follow: residues G25–I45, I50–I70, F105–V125, and L129–V149.

Belongs to the AlaE exporter family.

Its subcellular location is the cell inner membrane. Its function is as follows. Exports L-alanine. This Pantoea sp. (strain At-9b) protein is L-alanine exporter AlaE.